The chain runs to 318 residues: DNA-directed RNA polymerase subunit alpha (318 aa).

Residues 1-232 are alpha N-terminal domain (alpha-NTD); the sequence is MAHQRIVGPT…NLFSPLQNVR (232 aa). Positions 246–318 are alpha C-terminal domain (alpha-CTD); that stretch reads KMTEVLVEEL…HLPKEKFTKD (73 aa).

This sequence belongs to the RNA polymerase alpha chain family. As to quaternary structure, in plastids the minimal PEP RNA polymerase catalytic core is composed of four subunits: alpha, beta, beta', and beta''. When a (nuclear-encoded) sigma factor is associated with the core the holoenzyme is formed, which can initiate transcription.

The protein resides in the plastid. It is found in the chloroplast. The enzyme catalyses RNA(n) + a ribonucleoside 5'-triphosphate = RNA(n+1) + diphosphate. In terms of biological role, DNA-dependent RNA polymerase catalyzes the transcription of DNA into RNA using the four ribonucleoside triphosphates as substrates. The chain is DNA-directed RNA polymerase subunit alpha from Chlorokybus atmophyticus (Soil alga).